A 616-amino-acid polypeptide reads, in one-letter code: Dihydroxy-acid dehydratase (616 aa).

Aspartate 81 provides a ligand contact to Mg(2+). Cysteine 122 contributes to the [2Fe-2S] cluster binding site. Positions 123 and 124 each coordinate Mg(2+). N6-carboxylysine is present on lysine 124. Residue cysteine 195 coordinates [2Fe-2S] cluster. Glutamate 491 is a Mg(2+) binding site. Serine 517 acts as the Proton acceptor in catalysis.

This sequence belongs to the IlvD/Edd family. As to quaternary structure, homodimer. [2Fe-2S] cluster is required as a cofactor. Mg(2+) serves as cofactor.

The enzyme catalyses (2R)-2,3-dihydroxy-3-methylbutanoate = 3-methyl-2-oxobutanoate + H2O. It catalyses the reaction (2R,3R)-2,3-dihydroxy-3-methylpentanoate = (S)-3-methyl-2-oxopentanoate + H2O. It functions in the pathway amino-acid biosynthesis; L-isoleucine biosynthesis; L-isoleucine from 2-oxobutanoate: step 3/4. It participates in amino-acid biosynthesis; L-valine biosynthesis; L-valine from pyruvate: step 3/4. Its function is as follows. Functions in the biosynthesis of branched-chain amino acids. Catalyzes the dehydration of (2R,3R)-2,3-dihydroxy-3-methylpentanoate (2,3-dihydroxy-3-methylvalerate) into 2-oxo-3-methylpentanoate (2-oxo-3-methylvalerate) and of (2R)-2,3-dihydroxy-3-methylbutanoate (2,3-dihydroxyisovalerate) into 2-oxo-3-methylbutanoate (2-oxoisovalerate), the penultimate precursor to L-isoleucine and L-valine, respectively. The chain is Dihydroxy-acid dehydratase from Serratia proteamaculans (strain 568).